The following is a 102-amino-acid chain: RNA-binding protein Hfq (102 aa).

Residues 9 to 68 form the Sm domain; that stretch reads DPFLNALRRERVPVSIYLVNGIKLQGQIESFDQFVILLKNTVSQMVYKHAISTVVPSRPV. Positions 63-102 are disordered; that stretch reads VPSRPVSHHSNNAGGGASNNYHHGSNAQGSTAQQDSEETE. Low complexity predominate over residues 70–88; the sequence is HHSNNAGGGASNNYHHGSN.

The protein belongs to the Hfq family. In terms of assembly, homohexamer.

In terms of biological role, RNA chaperone that binds small regulatory RNA (sRNAs) and mRNAs to facilitate mRNA translational regulation in response to envelope stress, environmental stress and changes in metabolite concentrations. Also binds with high specificity to tRNAs. The polypeptide is RNA-binding protein Hfq (Salmonella agona (strain SL483)).